Reading from the N-terminus, the 1507-residue chain is ABC multidrug transporter SNQ2 (1507 aa).

The interval 1–73 is disordered; the sequence is MSSSSEISVA…RSSTAELSPE (73 aa). The segment covering 41–55 has biased composition (basic and acidic residues); it reads RSHEDADGDDAHSDN. Residues Asn-55 and Asn-336 are each glycosylated (N-linked (GlcNAc...) asparagine). The region spanning 157–412 is the ABC transporter 1 domain; sequence CLPYTIYKAI…FYRMGYECPP (256 aa). Transmembrane regions (helical) follow at residues 522 to 542, 556 to 576, and 605 to 625; these read AYTV…GSLY, GGVL…NLSF, and FPFR…LSGL. Asn-626 is a glycosylation site (N-linked (GlcNAc...) asparagine). The chain crosses the membrane as a helical span at residues 635–655; that stretch reads VYLFLTMCSESINALFELIAA. N-linked (GlcNAc...) asparagine glycosylation is present at Asn-659. A run of 2 helical transmembrane segments spans residues 665–685 and 773–793; these read SISG…IQLP and FGIM…ITEI. Residues 857–1099 form the ABC transporter 2 domain; sequence FIWRNVCYTI…LLSYFERNGA (243 aa). An N-linked (GlcNAc...) asparagine glycan is attached at Asn-878. Residue 893–900 participates in ATP binding; the sequence is GESGAGKT. The next 3 membrane-spanning stretches (helical) occupy residues 1193–1213, 1220–1240, and 1270–1290; these read YIMS…FTFY, TGLQ…APAM, and LITQ…IFFV. Asn-1311 carries N-linked (GlcNAc...) asparagine glycosylation. Transmembrane regions (helical) follow at residues 1314–1334 and 1339–1359; these read IMFQ…APNL and VILG…QPVS. Residue Asn-1428 is glycosylated (N-linked (GlcNAc...) asparagine). A helical transmembrane segment spans residues 1459 to 1479; the sequence is FGLYWAYIGFNICAMVAIYYI.

It belongs to the ABC transporter superfamily. ABCG family. PDR (TC 3.A.1.205) subfamily.

The protein resides in the cell membrane. Functionally, ABC multidrug transporter involved in the response to azoles such as fluconazole, itraconazole, ketoconazole and voriconazole and contributes to the development of PDR1-dependent azole resistance. Plays a role in biofilm tolerance to fluconazole. Also confers resistance to 4-nitroquinoline-N-oxide (4-NQO). The sequence is that of ABC multidrug transporter SNQ2 from Candida glabrata (strain ATCC 2001 / BCRC 20586 / JCM 3761 / NBRC 0622 / NRRL Y-65 / CBS 138) (Yeast).